A 101-amino-acid polypeptide reads, in one-letter code: Urease subunit gamma (101 aa).

It belongs to the urease gamma subunit family. As to quaternary structure, heterotrimer of UreA (gamma), UreB (beta) and UreC (alpha) subunits. Three heterotrimers associate to form the active enzyme.

It localises to the cytoplasm. The catalysed reaction is urea + 2 H2O + H(+) = hydrogencarbonate + 2 NH4(+). The protein operates within nitrogen metabolism; urea degradation; CO(2) and NH(3) from urea (urease route): step 1/1. The polypeptide is Urease subunit gamma (Ureaplasma urealyticum (Ureaplasma urealyticum biotype 2)).